We begin with the raw amino-acid sequence, 66 residues long: Beta-defensin 107A (66 aa).

A signal peptide spans 1-22; that stretch reads MKIFFFIFAALFLLAQIFQART. 2 disulfide bridges follow: cysteine 37–cysteine 51 and cysteine 41–cysteine 60.

It belongs to the beta-defensin family.

Its subcellular location is the secreted. In terms of biological role, has antibacterial activity. The polypeptide is Beta-defensin 107A (DEFB107A) (Gorilla gorilla gorilla (Western lowland gorilla)).